The following is a 375-amino-acid chain: Actin, cytoplasmic (375 aa).

It belongs to the actin family.

It is found in the cytoplasm. It localises to the cytoskeleton. The catalysed reaction is ATP + H2O = ADP + phosphate + H(+). Functionally, actins are highly conserved proteins that are involved in various types of cell motility and are ubiquitously expressed in all eukaryotic cells. This Oxytricha trifallax (Sterkiella histriomuscorum) protein is Actin, cytoplasmic.